We begin with the raw amino-acid sequence, 393 residues long: Nuclear hormone receptor family member nhr-90 (393 aa).

The segment at residues 6 to 79 is a DNA-binding region (nuclear receptor); that stretch reads LQTCKICGAE…AGMKIEYFQH (74 aa). Residues 9–30 form an NR C4-type zinc finger; the sequence is CKICGAENTRGNHFGVQCCRAC. The NR C4-type; degenerate zinc finger occupies 47–62; that stretch reads CLSVHCGEAARFCKPC. The NR LBD domain maps to 121-388; that stretch reads DLNSLVGKAS…FSHPEMFIDT (268 aa).

Belongs to the nuclear hormone receptor family.

It localises to the nucleus. Functionally, orphan nuclear receptor. The protein is Nuclear hormone receptor family member nhr-90 (nhr-90) of Caenorhabditis elegans.